Consider the following 516-residue polypeptide: Delta(24)-sterol reductase (516 aa).

Positions Met1–Gly22 are cleaved as a signal peptide. The Lumenal portion of the chain corresponds to Leu23 to Arg31. A helical membrane pass occupies residues Trp32–Val52. Residues Arg53–His516 are Cytoplasmic-facing. The FAD-binding PCMH-type domain occupies Phe58–Ala234. Position 163 to 175 (Thr163 to Ser175) interacts with FAD.

The protein belongs to the FAD-binding oxidoreductase/transferase type 4 family. FAD is required as a cofactor.

The protein localises to the endoplasmic reticulum membrane. It localises to the golgi apparatus membrane. The enzyme catalyses 5alpha-cholest-8-en-3beta-ol + NADP(+) = zymosterol + NADPH + H(+). The catalysed reaction is cholesterol + NADP(+) = desmosterol + NADPH + H(+). It catalyses the reaction lanosterol + NADPH + H(+) = 24,25-dihydrolanosterol + NADP(+). It participates in steroid biosynthesis; cholesterol biosynthesis. In terms of biological role, catalyzes the reduction of the delta-24 double bond of sterol intermediates during cholesterol biosynthesis. In addition to its cholesterol-synthesizing activity, can protect cells from oxidative stress by reducing caspase 3 activity during apoptosis induced by oxidative stress. Also protects against amyloid-beta peptide-induced apoptosis. The protein is Delta(24)-sterol reductase (Dhcr24) of Mus musculus (Mouse).